A 478-amino-acid polypeptide reads, in one-letter code: Chromosomal replication initiator protein DnaA (478 aa).

The tract at residues 1–90 (MSVELWQQCV…KRSSAPRAVQ (90 aa)) is domain I, interacts with DnaA modulators. Residues 91–141 (PASPPPAVVQAAPVAIEEASAARTVDAQPVAPATVRTERSVQVEGGLKHTS) form a domain II region. The domain III, AAA+ region stretch occupies residues 142 to 358 (YLNRAFTFEN…GALKRVIAHS (217 aa)). ATP is bound by residues G186, G188, K189, and T190. The interval 359–478 (HFTNHPITIE…YKNLLRTLTT (120 aa)) is domain IV, binds dsDNA.

It belongs to the DnaA family. As to quaternary structure, oligomerizes as a right-handed, spiral filament on DNA at oriC.

Its subcellular location is the cytoplasm. In terms of biological role, plays an essential role in the initiation and regulation of chromosomal replication. ATP-DnaA binds to the origin of replication (oriC) to initiate formation of the DNA replication initiation complex once per cell cycle. Binds the DnaA box (a 9 base pair repeat at the origin) and separates the double-stranded (ds)DNA. Forms a right-handed helical filament on oriC DNA; dsDNA binds to the exterior of the filament while single-stranded (ss)DNA is stabiized in the filament's interior. The ATP-DnaA-oriC complex binds and stabilizes one strand of the AT-rich DNA unwinding element (DUE), permitting loading of DNA polymerase. After initiation quickly degrades to an ADP-DnaA complex that is not apt for DNA replication. Binds acidic phospholipids. The protein is Chromosomal replication initiator protein DnaA of Azotobacter vinelandii (strain DJ / ATCC BAA-1303).